A 185-amino-acid chain; its full sequence is Potassium-transporting ATPase KdpC subunit (185 aa).

A helical membrane pass occupies residues 8–28; that stretch reads LGLVLIMFVLCGFIFPLTVTA. Residues 113–132 are disordered; that stretch reads GQKLSSDAVTTSGSGLDPDI. The segment covering 114 to 126 has biased composition (polar residues); the sequence is QKLSSDAVTTSGS.

The protein belongs to the KdpC family. As to quaternary structure, the system is composed of three essential subunits: KdpA, KdpB and KdpC.

It localises to the cell membrane. Functionally, part of the high-affinity ATP-driven potassium transport (or Kdp) system, which catalyzes the hydrolysis of ATP coupled with the electrogenic transport of potassium into the cytoplasm. This subunit acts as a catalytic chaperone that increases the ATP-binding affinity of the ATP-hydrolyzing subunit KdpB by the formation of a transient KdpB/KdpC/ATP ternary complex. The protein is Potassium-transporting ATPase KdpC subunit of Staphylococcus haemolyticus (strain JCSC1435).